The chain runs to 297 residues: MPLDNVRNIVLVLSGKGGVGKSSITTQLALTLSLQGHTVGVLDIDLTGPSIPRFFGIEESKVRQAPGGWIPVDVHAQQTLSAHRLQKTAEGQEIGALSCMSLGFILPNRSDAVIWRGPKKTAMVRQFLTDVLWPKVDYLLIDTPPGTSDEHISLLETLLKNTSTTPHASLPYLAGAVVVTTPQAISISDVKKELNFCKKTGIRVLGVVENMAGFVCPNCSECTNVFSKGGGEVMARDFNVPFLGSVPIDPAFVQLVEEGTRPLYPEGTIMAGTDVSAAPNGKEAGSTTHGSRLLICE.

Residue 15–22 (GKGGVGKS) coordinates ATP. [4Fe-4S] cluster is bound by residues C216 and C219.

Belongs to the Mrp/NBP35 ATP-binding proteins family. NUBP2/CFD1 subfamily. In terms of assembly, heterotetramer of 2 NBP35 and 2 CFD1 chains. [4Fe-4S] cluster serves as cofactor.

It is found in the cytoplasm. Functionally, component of the cytosolic iron-sulfur (Fe/S) protein assembly (CIA) machinery. Required for maturation of extramitochondrial Fe-S proteins. The NBP35-CFD1 heterotetramer forms a Fe-S scaffold complex, mediating the de novo assembly of an Fe-S cluster and its transfer to target apoproteins. The protein is Cytosolic Fe-S cluster assembly factor CFD1 of Phaeosphaeria nodorum (strain SN15 / ATCC MYA-4574 / FGSC 10173) (Glume blotch fungus).